A 251-amino-acid polypeptide reads, in one-letter code: Adenylate kinase (251 aa).

46-51 (GAGKGT) serves as a coordination point for ATP. The tract at residues 66 to 95 (ATGDMLRSQVQQQTPLGVEAKKIMDAGGLV) is NMP. AMP-binding positions include Thr-67, Arg-72, 93–95 (GLV), 122–125 (GFPR), and Gln-129. The LID stretch occupies residues 163 to 200 (GRLVHPASGRSYHKVFNPPKKEMIDDITGEALVQRSDD). ATP contacts are provided by residues Arg-164 and 173–174 (SY). AMP contacts are provided by Arg-197 and Arg-208. ATP is bound at residue Gln-236.

It belongs to the adenylate kinase family. AK2 subfamily. Monomer.

The protein resides in the cytoplasm. It is found in the cytosol. The protein localises to the mitochondrion intermembrane space. The enzyme catalyses AMP + ATP = 2 ADP. Functionally, catalyzes the reversible transfer of the terminal phosphate group between ATP and AMP. Plays an important role in cellular energy homeostasis and in adenine nucleotide metabolism. Adenylate kinase activity is critical for regulation of the phosphate utilization and the AMP de novo biosynthesis pathways. This is Adenylate kinase from Yarrowia lipolytica (strain CLIB 122 / E 150) (Yeast).